Here is a 788-residue protein sequence, read N- to C-terminus: Protein translocase subunit SecA 2 (788 aa).

Residues Gln-86, 104–108 (GEGKT), and Asp-493 contribute to the ATP site.

Belongs to the SecA family. As to quaternary structure, monomer and homodimer. Part of the essential Sec protein translocation apparatus which comprises SecA, SecYEG and auxiliary proteins SecDF. Other proteins may also be involved.

Its subcellular location is the cell membrane. The protein resides in the cytoplasm. It catalyses the reaction ATP + H2O + cellular proteinSide 1 = ADP + phosphate + cellular proteinSide 2.. Functionally, part of the Sec protein translocase complex. Interacts with the SecYEG preprotein conducting channel. Has a central role in coupling the hydrolysis of ATP to the transfer of proteins into and across the cell membrane, serving as an ATP-driven molecular motor driving the stepwise translocation of polypeptide chains across the membrane. The polypeptide is Protein translocase subunit SecA 2 (Geobacillus thermodenitrificans (strain NG80-2)).